The primary structure comprises 489 residues: Glutamyl-tRNA(Gln) amidotransferase subunit A (489 aa).

Residues lysine 77 and serine 152 each act as charge relay system in the active site. Serine 176 serves as the catalytic Acyl-ester intermediate.

Belongs to the amidase family. GatA subfamily. Heterotrimer of A, B and C subunits.

The enzyme catalyses L-glutamyl-tRNA(Gln) + L-glutamine + ATP + H2O = L-glutaminyl-tRNA(Gln) + L-glutamate + ADP + phosphate + H(+). In terms of biological role, allows the formation of correctly charged Gln-tRNA(Gln) through the transamidation of misacylated Glu-tRNA(Gln) in organisms which lack glutaminyl-tRNA synthetase. The reaction takes place in the presence of glutamine and ATP through an activated gamma-phospho-Glu-tRNA(Gln). The protein is Glutamyl-tRNA(Gln) amidotransferase subunit A of Protochlamydia amoebophila (strain UWE25).